The chain runs to 136 residues: Pilotin AspS 2 (136 aa).

Positions M1–G24 are cleaved as a signal peptide. The N-palmitoyl cysteine moiety is linked to residue C25. The S-diacylglycerol cysteine moiety is linked to residue C25. The cysteines at positions 94 and 131 are disulfide-linked.

This sequence belongs to the GspS/AspS pilotin family. Cryo-electron microscopy shows that the complex forms a cylindrical channel with 15 GspD2 subunits, each of which interacts with its surrounding AspS2 (GspS-beta).

It is found in the cell outer membrane. Its function is as follows. Part of a type II secretion system (T2SS, formerly general secretion pathway, GSP) for the export of folded proteins across the outer membrane. Required for correct assembly of the type II secretion system-beta (T2SS-beta), for localization of GspD-beta to the cell outer membrane and for export of a labile enterotoxin by T2SS-beta. Each AspS2 binds to 2 GspD2 subunits and may clamp the monomers together, stabilizing structure and accelerating its assembly. The polypeptide is Pilotin AspS 2 (Escherichia coli O78:H11 (strain H10407 / ETEC)).